A 444-amino-acid chain; its full sequence is UDP-N-acetylmuramate--L-alanine ligase (444 aa).

ATP is bound at residue 110–116 (GAHGKTS).

The protein belongs to the MurCDEF family.

The protein localises to the cytoplasm. It carries out the reaction UDP-N-acetyl-alpha-D-muramate + L-alanine + ATP = UDP-N-acetyl-alpha-D-muramoyl-L-alanine + ADP + phosphate + H(+). It participates in cell wall biogenesis; peptidoglycan biosynthesis. Functionally, cell wall formation. This chain is UDP-N-acetylmuramate--L-alanine ligase, found in Streptococcus pneumoniae (strain JJA).